The chain runs to 367 residues: 15-cis-zeta-carotene isomerase, chloroplastic (367 aa).

A chloroplast-targeting transit peptide spans 1–58 (MAVYHLLLSSPPSLLLLPPSPRRPNLTLIRRIPAHPRLGNSTSLLSSSSPVIRKILVR). The next 6 helical transmembrane spans lie at 95–115 (SWVY…VVWI), 137–157 (EVAM…LASL), 172–192 (VLFA…FINH), 211–231 (AIWV…FNLL), 269–289 (LWIG…HHLF), and 339–359 (LPYL…PLMQ).

As to expression, expressed in leaves and at lower levels in roots.

Its subcellular location is the plastid. It is found in the chloroplast membrane. The catalysed reaction is 9,9',15-tri-cis-zeta-carotene = 9,9'-di-cis-zeta-carotene. Functionally, isomerase involved in the biosynthesis of carotenoids. Catalyzes the cis- to trans-conversion of the 15-cis-bond in 9,15,9'-tri-cis-zeta-carotene. This Arabidopsis thaliana (Mouse-ear cress) protein is 15-cis-zeta-carotene isomerase, chloroplastic (Z-ISO).